We begin with the raw amino-acid sequence, 215 residues long: Calcium-binding protein 7 (215 aa).

Topologically, residues 1 to 188 (MPFHPVTAAL…QIRQTCVRKS (188 aa)) are cytoplasmic. EF-hand domains follow at residues 33–68 (DELE…LGYM) and 69–104 (PNEV…KLST). Residues aspartate 46, aspartate 48, asparagine 50, glutamate 57, aspartate 82, aspartate 84, aspartate 86, glutamine 88, and glutamate 93 each contribute to the Ca(2+) site. Residues 189–209 (LICAFAIAFIISVMLIAANQV) traverse the membrane as a helical; Anchor for type IV membrane protein segment. Residues 210–215 (LRSGMK) are Extracellular-facing.

Interacts with PI4KB. This binding competes with FREQ/NCS1 binding in a calcium-dependent manner.

It is found in the golgi apparatus. Its subcellular location is the trans-Golgi network membrane. The protein resides in the cytoplasm. The protein localises to the perinuclear region. It localises to the cell membrane. Negatively regulates Golgi-to-plasma membrane trafficking by interacting with PI4KB and inhibiting its activity. In Homo sapiens (Human), this protein is Calcium-binding protein 7 (CABP7).